The primary structure comprises 782 residues: Spastin (782 aa).

The interval 1–103 (MVRTKNQSSS…GNAPRGGNSS (103 aa)) is disordered. Residues 1-115 (MVRTKNQSSS…KQNLYVVSFP (115 aa)) lie on the Cytoplasmic side of the membrane. The required for localization to punctate cytoplasmic foci stretch occupies residues 1–212 (MVRTKNQSSS…RAIQPLEMAG (212 aa)). The span at 8–19 (SSSSSASSSTKS) shows a compositional bias: low complexity. The segment covering 25-34 (GGTTNRSRSC) has biased composition (polar residues). Composition is skewed to low complexity over residues 44–75 (SKSS…GSSP) and 84–93 (TTDADLTPTS). Residues 116–136 (IIFLFNVLRSLIYQLFCIFRY) constitute an intramembrane region (helical). The Cytoplasmic segment spans residues 137 to 782 (LYGASTKVIY…WSQDYGDITI (646 aa)). The segment at 210-782 (MAGNRAGGNY…WSQDYGDITI (573 aa)) is sufficient for interaction with microtubules and microtubule severing. The MIT domain maps to 235–310 (HRRAFEYISK…SMARDRLHFL (76 aa)). Positions 325–479 (KEQQQKKKSP…GSGSGASTPM (155 aa)) are disordered. The span at 334 to 343 (PQQQPQQQQQ) shows a compositional bias: low complexity. 2 stretches are compositionally biased toward polar residues: residues 408–426 (NKSQ…STSV) and 447–463 (QFSS…RTPI). Residues 465–479 (NNAAGGSGSGASTPM) form a required for interaction with microtubules region. 547 to 554 (GPPGNGKT) serves as a coordination point for ATP.

This sequence belongs to the AAA ATPase family. Spastin subfamily. In terms of assembly, homohexamer. The homohexamer is stabilized by ATP-binding. The homohexamer may adopt a ring conformation through which microtubules pass prior to being severed. Interacts with microtubules. Interacts with atl; may be involved in microtubule dynamics.

Its subcellular location is the membrane. The protein localises to the cytoplasm. The protein resides in the cytoskeleton. It localises to the microtubule organizing center. It is found in the centrosome. Its subcellular location is the chromosome. The protein localises to the lipid droplet. It catalyses the reaction n ATP + n H2O + a microtubule = n ADP + n phosphate + (n+1) alpha/beta tubulin heterodimers.. Functionally, ATP-dependent microtubule severing protein. Stimulates microtubule minus-end depolymerization and poleward microtubule flux in the mitotic spindle. Regulates microtubule stability in the neuromuscular junction synapse. Involved in lipid metabolism by regulating the size and distribution of lipid droplets. Involved in axon regeneration by regulating microtubule severing. This chain is Spastin, found in Drosophila grimshawi (Hawaiian fruit fly).